The chain runs to 206 residues: Large ribosomal subunit protein uL4 (206 aa).

The interval 47 to 76 (GTQSAKTRAEVSGGGIKPWRQKGTGRARQG) is disordered.

The protein belongs to the universal ribosomal protein uL4 family. In terms of assembly, part of the 50S ribosomal subunit.

One of the primary rRNA binding proteins, this protein initially binds near the 5'-end of the 23S rRNA. It is important during the early stages of 50S assembly. It makes multiple contacts with different domains of the 23S rRNA in the assembled 50S subunit and ribosome. Its function is as follows. Forms part of the polypeptide exit tunnel. In Clostridium botulinum (strain Okra / Type B1), this protein is Large ribosomal subunit protein uL4.